The sequence spans 470 residues: Nuclear receptor subfamily 0 group B member 1 (470 aa).

3 tandem repeats follow at residues methionine 1–cysteine 67, phenylalanine 68–cysteine 133, and phenylalanine 134–cysteine 200. The segment at methionine 1–valine 253 is 4 X 67 AA tandem repeats. 3 short sequence motifs (LXXLL motif) span residues leucine 13–leucine 17, leucine 80–leucine 84, and leucine 146–leucine 150. One copy of the 4; truncated repeat lies at phenylalanine 201–valine 253. The region spanning cysteine 215–lysine 469 is the NR LBD domain. The AF-2 motif signature appears at methionine 461–leucine 466.

It belongs to the nuclear hormone receptor family. NR0 subfamily. As to quaternary structure, homodimer. Interacts with NR5A1, NR5A2, NR0B2 and with COPS2. Interacts with ESRRB; represses ESRRB activity at the GATA6 promoter.

It localises to the nucleus. It is found in the cytoplasm. Functionally, nuclear receptor that lacks a DNA-binding domain and acts as a corepressor that inhibits the transcriptional activity of other nuclear receptors through heterodimeric interactions. Component of a cascade required for the development of the hypothalamic-pituitary-adrenal-gonadal axis. May also have a role in the development of the embryo and in the maintenance of embryonic stem cell pluripotency. The chain is Nuclear receptor subfamily 0 group B member 1 (NR0B1) from Pongo pygmaeus (Bornean orangutan).